A 311-amino-acid polypeptide reads, in one-letter code: tRNA dimethylallyltransferase (311 aa).

An ATP-binding site is contributed by 11 to 18; that stretch reads GPTAVGKT. Residue 13-18 participates in substrate binding; sequence TAVGKT. The interaction with substrate tRNA stretch occupies residues 36–39; the sequence is DSVQ.

It belongs to the IPP transferase family. In terms of assembly, monomer. It depends on Mg(2+) as a cofactor.

The catalysed reaction is adenosine(37) in tRNA + dimethylallyl diphosphate = N(6)-dimethylallyladenosine(37) in tRNA + diphosphate. Catalyzes the transfer of a dimethylallyl group onto the adenine at position 37 in tRNAs that read codons beginning with uridine, leading to the formation of N6-(dimethylallyl)adenosine (i(6)A). The polypeptide is tRNA dimethylallyltransferase (Exiguobacterium sp. (strain ATCC BAA-1283 / AT1b)).